The chain runs to 318 residues: Aspartate carbamoyltransferase catalytic subunit (318 aa).

2 residues coordinate carbamoyl phosphate: Arg56 and Thr57. Lys84 serves as a coordination point for L-aspartate. Arg106, His143, and Gln146 together coordinate carbamoyl phosphate. Arg176 and Arg230 together coordinate L-aspartate. Residues Gly271 and Pro272 each coordinate carbamoyl phosphate.

This sequence belongs to the aspartate/ornithine carbamoyltransferase superfamily. ATCase family. Heterododecamer (2C3:3R2) of six catalytic PyrB chains organized as two trimers (C3), and six regulatory PyrI chains organized as three dimers (R2).

It carries out the reaction carbamoyl phosphate + L-aspartate = N-carbamoyl-L-aspartate + phosphate + H(+). It functions in the pathway pyrimidine metabolism; UMP biosynthesis via de novo pathway; (S)-dihydroorotate from bicarbonate: step 2/3. Its function is as follows. Catalyzes the condensation of carbamoyl phosphate and aspartate to form carbamoyl aspartate and inorganic phosphate, the committed step in the de novo pyrimidine nucleotide biosynthesis pathway. This Mycobacterium avium (strain 104) protein is Aspartate carbamoyltransferase catalytic subunit.